Reading from the N-terminus, the 676-residue chain is Vitamin K-dependent protein S (676 aa).

The signal sequence occupies residues 1–24; sequence MRVLGGRCGALLACLLLVLPVSEA. Residues 25–41 constitute a propeptide that is removed on maturation; sequence NFLSKQQASQVLVRKRR. In terms of domain architecture, Gla spans 42-87; it reads ANSLLEETKQGNLERECIEELCNKEEAREVFENDPETDYFYPKYLV. Residues E47, E48, E55, E57, E60, E61, E66, E67, E70, E73, and E77 each carry the 4-carboxyglutamate modification. Residues C58 and C63 are joined by a disulfide bond. Residues 88-116 are thrombin-sensitive; that stretch reads CLRSFQTGLFTAARQSTNAYPDLRSCVNA. The EGF-like 1 domain occupies 117-155; that stretch reads IPDQCSPLPCNEDGYMSCKDGKASFTCTCKPGWQGEKCE. Intrachain disulfides connect C121/C134, C126/C143, C145/C154, C161/C175, C171/C184, C186/C199, C205/C217, C212/C226, C228/C241, C247/C256, C252/C265, C267/C282, and C449/C475. D136 carries the (3R)-3-hydroxyaspartate modification. The EGF-like 2; calcium-binding domain maps to 157 to 200; it reads DINECKDPSNINGGCSQICDNTPGSYHCSCKNGFVMLSNKKDCK. One can recognise an EGF-like 3; calcium-binding domain in the interval 201 to 242; the sequence is DVDECSLKPSICGTAVCKNIPGDFECECPEGYRYNLKSKSCE. An EGF-like 4; calcium-binding domain is found at 243 to 283; that stretch reads DIDECSENMCAQLCVNYPGGYTCYCDGKKGFKLAQDQKSCE. Laminin G-like domains are found at residues 299–475 and 484–666; these read LLYL…NKHC and YYPG…AHSC. N-linked (GlcNAc...) asparagine glycans are attached at residues N499, N509, and N530. C639 and C666 form a disulfide bridge.

Post-translationally, the iron and 2-oxoglutarate dependent 3-hydroxylation of aspartate and asparagine is (R) stereospecific within EGF domains. In terms of tissue distribution, plasma.

It is found in the secreted. Functionally, anticoagulant plasma protein; it is a cofactor to activated protein C in the degradation of coagulation factors Va and VIIIa. It helps to prevent coagulation and stimulating fibrinolysis. The polypeptide is Vitamin K-dependent protein S (PROS1) (Homo sapiens (Human)).